Consider the following 205-residue polypeptide: Dephospho-CoA kinase (205 aa).

Residues 5 to 201 enclose the DPCK domain; the sequence is VVGLTGGIGS…QRYLQLSGNH (197 aa). Position 13–18 (13–18) interacts with ATP; sequence GSGKTT.

The protein belongs to the CoaE family.

The protein localises to the cytoplasm. It carries out the reaction 3'-dephospho-CoA + ATP = ADP + CoA + H(+). The protein operates within cofactor biosynthesis; coenzyme A biosynthesis; CoA from (R)-pantothenate: step 5/5. Its function is as follows. Catalyzes the phosphorylation of the 3'-hydroxyl group of dephosphocoenzyme A to form coenzyme A. This chain is Dephospho-CoA kinase, found in Shewanella oneidensis (strain ATCC 700550 / JCM 31522 / CIP 106686 / LMG 19005 / NCIMB 14063 / MR-1).